The primary structure comprises 286 residues: Shikimate dehydrogenase (NADP(+)) (286 aa).

Residues 19 to 21 (SFS) and Thr-66 each bind shikimate. The Proton acceptor role is filled by Lys-70. Residues Asn-91 and Asp-107 each coordinate shikimate. NADP(+) is bound by residues 129-133 (GSGGA) and Leu-229. Tyr-231 contributes to the shikimate binding site. Gly-252 is a binding site for NADP(+).

It belongs to the shikimate dehydrogenase family. Homodimer.

The catalysed reaction is shikimate + NADP(+) = 3-dehydroshikimate + NADPH + H(+). It functions in the pathway metabolic intermediate biosynthesis; chorismate biosynthesis; chorismate from D-erythrose 4-phosphate and phosphoenolpyruvate: step 4/7. Involved in the biosynthesis of the chorismate, which leads to the biosynthesis of aromatic amino acids. Catalyzes the reversible NADPH linked reduction of 3-dehydroshikimate (DHSA) to yield shikimate (SA). The chain is Shikimate dehydrogenase (NADP(+)) from Prochlorococcus marinus (strain MIT 9301).